A 470-amino-acid polypeptide reads, in one-letter code: Chromosomal replication initiator protein DnaA (470 aa).

The interval 1–68 (MENFWSLCLG…SALAEEVLST (68 aa)) is domain I, interacts with DnaA modulators. A domain II region spans residues 68–133 (TPVQIELALY…KKPKTLTETS (66 aa)). A domain III, AAA+ region region spans residues 134–350 (GLNPAFRFDN…GALNRIIAMA (217 aa)). Gly-178, Gly-180, Lys-181, and Thr-182 together coordinate ATP. A domain IV, binds dsDNA region spans residues 351 to 470 (NFTGHAIDVS…IAVLIQVIRD (120 aa)).

Belongs to the DnaA family. In terms of assembly, oligomerizes as a right-handed, spiral filament on DNA at oriC.

It localises to the cytoplasm. Plays an essential role in the initiation and regulation of chromosomal replication. ATP-DnaA binds to the origin of replication (oriC) to initiate formation of the DNA replication initiation complex once per cell cycle. Binds the DnaA box (a 9 base pair repeat at the origin) and separates the double-stranded (ds)DNA. Forms a right-handed helical filament on oriC DNA; dsDNA binds to the exterior of the filament while single-stranded (ss)DNA is stabiized in the filament's interior. The ATP-DnaA-oriC complex binds and stabilizes one strand of the AT-rich DNA unwinding element (DUE), permitting loading of DNA polymerase. After initiation quickly degrades to an ADP-DnaA complex that is not apt for DNA replication. Binds acidic phospholipids. The protein is Chromosomal replication initiator protein DnaA of Methylobacillus flagellatus (strain ATCC 51484 / DSM 6875 / VKM B-1610 / KT).